A 366-amino-acid polypeptide reads, in one-letter code: tRNA 2-selenouridine synthase (366 aa).

Positions 14 to 137 (LLENRPLIDV…IRSFLINTIE (124 aa)) constitute a Rhodanese domain. C97 functions as the S-selanylcysteine intermediate in the catalytic mechanism.

It belongs to the SelU family. As to quaternary structure, monomer.

It carries out the reaction 5-methylaminomethyl-2-thiouridine(34) in tRNA + selenophosphate + (2E)-geranyl diphosphate + H2O + H(+) = 5-methylaminomethyl-2-selenouridine(34) in tRNA + (2E)-thiogeraniol + phosphate + diphosphate. The enzyme catalyses 5-methylaminomethyl-2-thiouridine(34) in tRNA + (2E)-geranyl diphosphate = 5-methylaminomethyl-S-(2E)-geranyl-thiouridine(34) in tRNA + diphosphate. The catalysed reaction is 5-methylaminomethyl-S-(2E)-geranyl-thiouridine(34) in tRNA + selenophosphate + H(+) = 5-methylaminomethyl-2-(Se-phospho)selenouridine(34) in tRNA + (2E)-thiogeraniol. It catalyses the reaction 5-methylaminomethyl-2-(Se-phospho)selenouridine(34) in tRNA + H2O = 5-methylaminomethyl-2-selenouridine(34) in tRNA + phosphate. Involved in the post-transcriptional modification of the uridine at the wobble position (U34) of tRNA(Lys), tRNA(Glu) and tRNA(Gln). Catalyzes the conversion of 2-thiouridine (S2U-RNA) to 2-selenouridine (Se2U-RNA). Acts in a two-step process involving geranylation of 2-thiouridine (S2U) to S-geranyl-2-thiouridine (geS2U) and subsequent selenation of the latter derivative to 2-selenouridine (Se2U) in the tRNA chain. The protein is tRNA 2-selenouridine synthase of Shewanella frigidimarina (strain NCIMB 400).